The sequence spans 221 residues: Large ribosomal subunit protein uL4 (221 aa).

Positions 48-77 (TASTKTRGEVSGGGRKPWIQKHTGRARQGS) are disordered.

It belongs to the universal ribosomal protein uL4 family. As to quaternary structure, part of the 50S ribosomal subunit.

Its function is as follows. One of the primary rRNA binding proteins, this protein initially binds near the 5'-end of the 23S rRNA. It is important during the early stages of 50S assembly. It makes multiple contacts with different domains of the 23S rRNA in the assembled 50S subunit and ribosome. Forms part of the polypeptide exit tunnel. The chain is Large ribosomal subunit protein uL4 from Thermosipho africanus (strain TCF52B).